Consider the following 111-residue polypeptide: Large ribosomal subunit protein P2-2 (111 aa).

The segment at 86–111 (APAAAAAKKDEPEEEADDDMGFGLFD) is disordered.

It belongs to the eukaryotic ribosomal protein P1/P2 family. P1 and P2 exist as dimers at the large ribosomal subunit. In terms of processing, phosphorylated.

In terms of biological role, plays an important role in the elongation step of protein synthesis. The chain is Large ribosomal subunit protein P2-2 (LIP') from Leishmania infantum.